The sequence spans 257 residues: MTQHSRDTPQFYLTAPSPCPYLPDRSERKVFTHLVGEKAGELNDLLTHGGFRRSQSIAYRPACDQCRACVSVRVIADEFQLSRGARRVLARNADITGSLRAATPTSEQYSIFRAYLDQRHRHGGMADMTVLDYAMMVEDSHVETRIIEYRRRGADRVDNKRGDLVGVALTDVLSDGLSMVYSFFDPSEQNRSFGTFMILDHISRARQLGLPYVYLGYWIEGSRKMDYKGRFLPQQRLAPTGWLRVDADGETKHETTE.

This sequence belongs to the R-transferase family. Bpt subfamily.

It localises to the cytoplasm. The enzyme catalyses N-terminal L-glutamyl-[protein] + L-leucyl-tRNA(Leu) = N-terminal L-leucyl-L-glutamyl-[protein] + tRNA(Leu) + H(+). It catalyses the reaction N-terminal L-aspartyl-[protein] + L-leucyl-tRNA(Leu) = N-terminal L-leucyl-L-aspartyl-[protein] + tRNA(Leu) + H(+). Its function is as follows. Functions in the N-end rule pathway of protein degradation where it conjugates Leu from its aminoacyl-tRNA to the N-termini of proteins containing an N-terminal aspartate or glutamate. The protein is Aspartate/glutamate leucyltransferase of Nitrobacter winogradskyi (strain ATCC 25391 / DSM 10237 / CIP 104748 / NCIMB 11846 / Nb-255).